A 197-amino-acid polypeptide reads, in one-letter code: MEVHNVELVMSAVAPSQYPTTGFPEIGLAGRSNVGKSSLINVLINRNSYARTSSQPGKTQTLNFYKVEDQLYFVDVPGYGYAKVSKKEREKWGQMIETYLTSRETLRGVVILVDARHAPTKDDVAMYEWMRYYEMPLLVVATKSDKIPRGKWNKQESLIKKTLNFQAEDDFIAFSAKTKEGKDAVWQWIEAHTVGGN.

One can recognise an EngB-type G domain in the interval 22-195 (GFPEIGLAGR…WQWIEAHTVG (174 aa)). GTP contacts are provided by residues 30–37 (GRSNVGKS), 57–61 (GKTQT), 75–78 (DVPG), 142–145 (TKSD), and 174–176 (FSA). 2 residues coordinate Mg(2+): Ser-37 and Thr-59.

Belongs to the TRAFAC class TrmE-Era-EngA-EngB-Septin-like GTPase superfamily. EngB GTPase family. It depends on Mg(2+) as a cofactor.

In terms of biological role, necessary for normal cell division and for the maintenance of normal septation. The polypeptide is Probable GTP-binding protein EngB (Lactiplantibacillus plantarum (strain ATCC BAA-793 / NCIMB 8826 / WCFS1) (Lactobacillus plantarum)).